Consider the following 313-residue polypeptide: Acetaldehyde dehydrogenase 3 (313 aa).

11–14 (SGNI) lines the NAD(+) pocket. Cysteine 129 acts as the Acyl-thioester intermediate in catalysis. NAD(+) is bound by residues 160–168 (SAGPGTRAN) and asparagine 288.

The protein belongs to the acetaldehyde dehydrogenase family.

The enzyme catalyses acetaldehyde + NAD(+) + CoA = acetyl-CoA + NADH + H(+). The protein is Acetaldehyde dehydrogenase 3 of Rhizorhabdus wittichii (strain DSM 6014 / CCUG 31198 / JCM 15750 / NBRC 105917 / EY 4224 / RW1) (Sphingomonas wittichii).